We begin with the raw amino-acid sequence, 321 residues long: Phospho-N-acetylmuramoyl-pentapeptide-transferase (321 aa).

10 consecutive transmembrane segments (helical) span residues 1–21 (MIFI…PILI), 50–70 (MGGL…IIFV), 76–96 (IILL…DDYI), 112–132 (FLAQ…FHLV), 140–160 (IPFV…IVFW), 176–196 (GLAT…SYML), 200–220 (AIGI…PYNL), 225–245 (VFMG…ISIM), 250–270 (LSLI…MLQV), and 300–320 (VVTV…WIGV).

Belongs to the glycosyltransferase 4 family. MraY subfamily. The cofactor is Mg(2+).

The protein resides in the cell membrane. It carries out the reaction UDP-N-acetyl-alpha-D-muramoyl-L-alanyl-gamma-D-glutamyl-L-lysyl-D-alanyl-D-alanine + di-trans,octa-cis-undecaprenyl phosphate = Mur2Ac(oyl-L-Ala-gamma-D-Glu-L-Lys-D-Ala-D-Ala)-di-trans,octa-cis-undecaprenyl diphosphate + UMP. Its pathway is cell wall biogenesis; peptidoglycan biosynthesis. In terms of biological role, catalyzes the initial step of the lipid cycle reactions in the biosynthesis of the cell wall peptidoglycan: transfers peptidoglycan precursor phospho-MurNAc-pentapeptide from UDP-MurNAc-pentapeptide onto the lipid carrier undecaprenyl phosphate, yielding undecaprenyl-pyrophosphoryl-MurNAc-pentapeptide, known as lipid I. The chain is Phospho-N-acetylmuramoyl-pentapeptide-transferase from Staphylococcus epidermidis (strain ATCC 35984 / DSM 28319 / BCRC 17069 / CCUG 31568 / BM 3577 / RP62A).